The sequence spans 279 residues: MNDRNNRWRTMKDEETFEISIPFEEAPHLDSQILYRLSPSRRNVEEPPEGASPTLALMSSVKAQLHMALERNSWLQKRIEDLEEERDFLRCQLDKFISSARMDAEDYCRMKPGPRRVDGDSRAGVGEASDPESAASSFSGVSEDGSASERKRQKQKGSTSRKRFGKTKARERQRVKDADGVLCRYKKILGTFQKLKSMSRAFEHHRVDRNTVALTTPIAELLIVAPEKLAEVGEFDPSKERLLEYSRRCFLALDDETLKKVQALKKSKLLLPITYRFKR.

The stretch at 62-101 forms a coiled coil; the sequence is KAQLHMALERNSWLQKRIEDLEEERDFLRCQLDKFISSAR. The span at 109-121 shows a compositional bias: basic and acidic residues; sequence RMKPGPRRVDGDS. Positions 109-173 are disordered; the sequence is RMKPGPRRVD…FGKTKARERQ (65 aa). At Ser129 the chain carries Phosphoserine. The short motif at 151 to 164 is the Bipartite nuclear localization signal element; it reads KRQKQKGSTSRKRF. Basic residues predominate over residues 151–167; sequence KRQKQKGSTSRKRFGKT.

In terms of assembly, interacts with p53/TP53.

It is found in the nucleus. Promotes the degradation of p53/TP53 protein and inhibits its transactivity. This is Coiled-coil domain-containing protein 106 (Ccdc106) from Mus musculus (Mouse).